The chain runs to 271 residues: Ribosomal RNA small subunit methyltransferase A (271 aa).

6 residues coordinate S-adenosyl-L-methionine: H14, L16, G41, E63, D89, and N107.

Belongs to the class I-like SAM-binding methyltransferase superfamily. rRNA adenine N(6)-methyltransferase family. RsmA subfamily.

The protein localises to the cytoplasm. It catalyses the reaction adenosine(1518)/adenosine(1519) in 16S rRNA + 4 S-adenosyl-L-methionine = N(6)-dimethyladenosine(1518)/N(6)-dimethyladenosine(1519) in 16S rRNA + 4 S-adenosyl-L-homocysteine + 4 H(+). Specifically dimethylates two adjacent adenosines (A1518 and A1519) in the loop of a conserved hairpin near the 3'-end of 16S rRNA in the 30S particle. May play a critical role in biogenesis of 30S subunits. The chain is Ribosomal RNA small subunit methyltransferase A from Lawsonia intracellularis (strain PHE/MN1-00).